We begin with the raw amino-acid sequence, 607 residues long: Aspartate--tRNA(Asp/Asn) ligase (607 aa).

An L-aspartate-binding site is contributed by glutamate 168. The interval 192–195 (QLFK) is aspartate. Arginine 214 provides a ligand contact to L-aspartate. Residues 214–216 (RDE) and glutamine 223 contribute to the ATP site. Histidine 449 serves as a coordination point for L-aspartate. Glutamate 483 is an ATP binding site. Position 490 (arginine 490) interacts with L-aspartate. 535–538 (GWDR) contributes to the ATP binding site. The tract at residues 578-607 (LEAGVDARPKPEARAQAGTAGPAAPVADPT) is disordered. Residues 580–590 (AGVDARPKPEA) show a composition bias toward basic and acidic residues. The span at 591–607 (RAQAGTAGPAAPVADPT) shows a compositional bias: low complexity.

Belongs to the class-II aminoacyl-tRNA synthetase family. Type 1 subfamily. As to quaternary structure, homodimer.

It is found in the cytoplasm. The enzyme catalyses tRNA(Asx) + L-aspartate + ATP = L-aspartyl-tRNA(Asx) + AMP + diphosphate. Aspartyl-tRNA synthetase with relaxed tRNA specificity since it is able to aspartylate not only its cognate tRNA(Asp) but also tRNA(Asn). Reaction proceeds in two steps: L-aspartate is first activated by ATP to form Asp-AMP and then transferred to the acceptor end of tRNA(Asp/Asn). The sequence is that of Aspartate--tRNA(Asp/Asn) ligase from Salinispora tropica (strain ATCC BAA-916 / DSM 44818 / JCM 13857 / NBRC 105044 / CNB-440).